Reading from the N-terminus, the 169-residue chain is Cell division inhibitor SulA (169 aa).

Positions 106 to 112 (ALRTGNY) are ftsZ binding. The interval 162–169 (KIHSNLYH) is lon protease binding.

Belongs to the SulA family. As to quaternary structure, interacts with FtsZ. Is rapidly cleaved and degraded by the Lon protease once DNA damage is repaired.

In terms of biological role, component of the SOS system and an inhibitor of cell division. Accumulation of SulA causes rapid cessation of cell division and the appearance of long, non-septate filaments. In the presence of GTP, binds a polymerization-competent form of FtsZ in a 1:1 ratio, thus inhibiting FtsZ polymerization and therefore preventing it from participating in the assembly of the Z ring. This mechanism prevents the premature segregation of damaged DNA to daughter cells during cell division. The chain is Cell division inhibitor SulA from Shigella flexneri serotype 5b (strain 8401).